The following is a 615-amino-acid chain: Angiotensin-converting enzyme (615 aa).

The N-terminal stretch at 1 to 17 (MRLFLLALLATLAVTQA) is a signal peptide. Positions 19–607 (VKEEIQAKEY…IKNNVHIGWT (589 aa)) constitute a Peptidase M2 domain. Asparagine 53 is a glycosylation site (N-linked (GlcNAc...) asparagine). Cysteine 133 and cysteine 141 are oxidised to a cystine. Asparagine 196 and asparagine 311 each carry an N-linked (GlcNAc...) asparagine glycan. Cysteine 336 and cysteine 354 form a disulfide bridge. Zn(2+) is bound at residue histidine 367. Glutamate 368 functions as the Proton acceptor in the catalytic mechanism. Residues histidine 371 and glutamate 395 each coordinate Zn(2+). The active-site Proton donor is histidine 497. Cysteine 522 and cysteine 540 are oxidised to a cystine.

The protein belongs to the peptidase M2 family. Requires Zn(2+) as cofactor. In terms of processing, glycosylated. In terms of tissue distribution, expressed in vesicular structures in spermatocytes and early spermatids (at protein level).

It localises to the secreted. Its subcellular location is the extracellular space. The catalysed reaction is Release of a C-terminal dipeptide, oligopeptide-|-Xaa-Yaa, when Xaa is not Pro, and Yaa is neither Asp nor Glu. Thus, conversion of angiotensin I to angiotensin II, with increase in vasoconstrictor activity, but no action on angiotensin II.. Inhibited by captopril and, to a lesser extent, by lisinopril, trandolaprilat, fosinoprilat and enalaprilat. Functionally, may be involved in the specific maturation or degradation of a number of bioactive peptides. May play a role in the contractions of the heart, gut and testes, and in spermatid differentiation. This chain is Angiotensin-converting enzyme (Ance), found in Drosophila melanogaster (Fruit fly).